Reading from the N-terminus, the 268-residue chain is MAGELRIMENKSREDINLSPVSKIEIYSFFDPFSSDCFKLSAILSKLRIEYNQYIRIRHILNPSLKVLTKCQAQSTSNFDNIALAYKAAELQGRLRAERFIHLMQNEIIPKRDIITKSMICDCIQNAGIDLEVFKDDLQKSKLTESLKIDLHIAREMEIEQAPSLVFFSEDVHEEGLKVEGLYPYHIYTYIINELMGKPIEKNLPPKLETYIQQQQLVTMEELLTIYEWPEKLLNKELKKLAIQQKIEKLKYPDGDFWKSKMPKIKSK.

The protein belongs to the SpxH family. As to quaternary structure, interacts with Spx.

It localises to the cytoplasm. Its function is as follows. Adapter protein required for efficient degradation of Spx by ClpXP under non-stress conditions. Interaction with Spx stabilizes Spx and exposes the C-terminus of Spx for recognition and proteolysis by ClpXP. The sequence is that of ClpXP adapter protein SpxH from Staphylococcus aureus (strain MRSA252).